An 80-amino-acid polypeptide reads, in one-letter code: Putative membrane protein insertion efficiency factor (80 aa).

Belongs to the UPF0161 family.

Its subcellular location is the cell inner membrane. Functionally, could be involved in insertion of integral membrane proteins into the membrane. The sequence is that of Putative membrane protein insertion efficiency factor from Kosmotoga olearia (strain ATCC BAA-1733 / DSM 21960 / TBF 19.5.1).